The primary structure comprises 324 residues: tRNA U34 carboxymethyltransferase (324 aa).

Carboxy-S-adenosyl-L-methionine contacts are provided by residues Lys91, Trp105, Lys110, Gly130, 152–154 (DPS), 181–182 (IE), Met196, Tyr200, and Arg315.

It belongs to the class I-like SAM-binding methyltransferase superfamily. CmoB family. As to quaternary structure, homotetramer.

It catalyses the reaction carboxy-S-adenosyl-L-methionine + 5-hydroxyuridine(34) in tRNA = 5-carboxymethoxyuridine(34) in tRNA + S-adenosyl-L-homocysteine + H(+). Functionally, catalyzes carboxymethyl transfer from carboxy-S-adenosyl-L-methionine (Cx-SAM) to 5-hydroxyuridine (ho5U) to form 5-carboxymethoxyuridine (cmo5U) at position 34 in tRNAs. The sequence is that of tRNA U34 carboxymethyltransferase from Photobacterium profundum (strain SS9).